Reading from the N-terminus, the 104-residue chain is Large ribosomal subunit protein uL24 (104 aa).

This sequence belongs to the universal ribosomal protein uL24 family. As to quaternary structure, part of the 50S ribosomal subunit.

Its function is as follows. One of two assembly initiator proteins, it binds directly to the 5'-end of the 23S rRNA, where it nucleates assembly of the 50S subunit. Functionally, one of the proteins that surrounds the polypeptide exit tunnel on the outside of the subunit. This is Large ribosomal subunit protein uL24 from Clostridium beijerinckii (strain ATCC 51743 / NCIMB 8052) (Clostridium acetobutylicum).